Reading from the N-terminus, the 627-residue chain is DNA mismatch repair protein MutL (627 aa).

The protein belongs to the DNA mismatch repair MutL/HexB family.

Functionally, this protein is involved in the repair of mismatches in DNA. It is required for dam-dependent methyl-directed DNA mismatch repair. May act as a 'molecular matchmaker', a protein that promotes the formation of a stable complex between two or more DNA-binding proteins in an ATP-dependent manner without itself being part of a final effector complex. In Mesorhizobium japonicum (strain LMG 29417 / CECT 9101 / MAFF 303099) (Mesorhizobium loti (strain MAFF 303099)), this protein is DNA mismatch repair protein MutL.